The primary structure comprises 209 residues: Probable nicotinate-nucleotide adenylyltransferase (209 aa).

This sequence belongs to the NadD family.

It carries out the reaction nicotinate beta-D-ribonucleotide + ATP + H(+) = deamido-NAD(+) + diphosphate. Its pathway is cofactor biosynthesis; NAD(+) biosynthesis; deamido-NAD(+) from nicotinate D-ribonucleotide: step 1/1. Catalyzes the reversible adenylation of nicotinate mononucleotide (NaMN) to nicotinic acid adenine dinucleotide (NaAD). The sequence is that of Probable nicotinate-nucleotide adenylyltransferase from Idiomarina loihiensis (strain ATCC BAA-735 / DSM 15497 / L2-TR).